The sequence spans 124 residues: Small ribosomal subunit protein eS6 (124 aa).

This sequence belongs to the eukaryotic ribosomal protein eS6 family.

In Methanococcus maripaludis (strain C5 / ATCC BAA-1333), this protein is Small ribosomal subunit protein eS6.